A 1388-amino-acid chain; its full sequence is MSRPPPTGKMPGAPEAAAGDGAGAGRQRKLEALIRDPRSPINVESLLDGLNSLVLDLDFPALRKNKNIDNFLNRYEKIVKKIRGLQMKAEDYDVVKVIGRGAFGEVQLVRHKASQKVYAMKLLSKFEMIKRSDSAFFWEERDIMAFANSPWVVQLFCAFQDDRYLYMVMEYMPGGDLVNLMSNYDVPEKWAKFYTAEVVLALDAIHSMGLIHRDVKPDNMLLDKHGHLKLADFGTCMKMDETGMVHCDTAVGTPDYISPEVLKSQGGDGYYGRECDWWSVGVFLFEMLVGDTPFYADSLVGTYSKIMDHKNSLCFPEDTEISKHAKNLICAFLTDREVRLGRNGVEEIKSASFFKNDQWNWDNIRETAAPVVPELSSDIDSSNFDDIEDDKGDVETFPIPKAFVGNQLPFIGFTYFRENLLLSDSPPCRENDAIQTRKSEESQEIQKKLYALEEHLSSEVQAKEELEQKCKSINTRLEKTAKELEEEITFRKNVESTLRQLEREKALLQHKNAEYQRKADHEADKKRNLENDVNSLKDQLEDLKKRNQSSQISTEKVNQLQKQLDEANALLRTESDTAARLRKTQAESSKQIQQLESNNRDLQDKNCLLETAKLKLEKEFINLQSALESERRDRTHGSEIINDLQGRISGLEEDLKTGKTLLAKVELEKRQLQEKLTDLEKEKSNMEIDMTYQLKVIQQSLEQEEAEHKTTKARLADKNKIYESIEEAKSEAMKEMEKKLLEERSLKQKVENLLLEAEKRCSILDCDLKQSQQKLNELLKQKDVLNEDVRNLTLKIEQETQKRCLMQNDLKMQTQQVNTLKMSEKQIKQENNHLMEMKMNLEKQNAELRKERQDADGQMKELQDQLEAEQYFSTLYKTQVRELKEENEEKTKLCKELQQKKQDLQDERDSLAAQLEITLTKADSEQLARSIAEEQYSDLEKEKIMKELEIKEMMARHKQELTEKDATIASLEETNRTLTSDVANLANEKEELNNKLKDTQEQLSKLKDEEISAAAIKAQFEKQLLTERTLKTQAVNKLAEIMNRKEPVKRGSDTDVRRKEKENRKLHMELKSEREKLTQQMIKYQKELNEMQAQIAEESQIRIELQMTLDSKDSDIEQLRSQLQALHIGMDSSSIGSGPGDAEPDDGFPESRLEGWLSLPVRNNTKKFGWVKKYVIVSSKKILFYDSEQDKEQSNPYMVLDIDKLFHVRPVTQTDVYRADAKEIPRIFQILYANEGESKKEPEFPVEPVGEKSNYICHKGHEFIPTLYHFPTNCEACMKPLWHMFKPPPALECSRCHIKCHKDHMDKKEEIIAPCKVYYDISSAKNLLLLANSTEEQQKWVSRLVKKIPKKPPAPDPFARSSPRTSMKIQQNQSIRRPSRQLAPNKPS.

The segment at 1 to 24 is disordered; it reads MSRPPPTGKMPGAPEAAAGDGAGA. In terms of domain architecture, Protein kinase spans 92-354; the sequence is YDVVKVIGRG…VEEIKSASFF (263 aa). ATP contacts are provided by residues 98-106 and lysine 121; that span reads IGRGAFGEV. Aspartate 214 (proton acceptor) is an active-site residue. Residues 357-425 enclose the AGC-kinase C-terminal domain; that stretch reads DQWNWDNIRE…FRENLLLSDS (69 aa). The interval 363 to 784 is interaction with PPP1R12A; that stretch reads NIRETAAPVV…LNELLKQKDV (422 aa). The interaction with NPM1 stretch occupies residues 373–420; it reads PELSSDIDSSNFDDIEDDKGDVETFPIPKAFVGNQLPFIGFTYFRENL. At threonine 414 the chain carries Phosphothreonine; by ROCK2. 2 coiled-coil regions span residues 439-1024 and 1052-1131; these read SEES…EKQL and SDTD…IGMD. The 77-residue stretch at 497 to 573 folds into the REM-1 domain; the sequence is TLRQLEREKA…LDEANALLRT (77 aa). Over residues 513-530 the composition is skewed to basic and acidic residues; that stretch reads AEYQRKADHEADKKRNLE. Positions 513 to 532 are disordered; sequence AEYQRKADHEADKKRNLEND. Phosphotyrosine; by SRC is present on tyrosine 722. The RhoBD domain occupies 979-1047; the sequence is TSDVANLANE…LAEIMNRKEP (69 aa). The tract at residues 979–1047 is RHOA binding; that stretch reads TSDVANLANE…LAEIMNRKEP (69 aa). Phosphoserine is present on serine 1137. The 200-residue stretch at 1150 to 1349 folds into the PH domain; that stretch reads ESRLEGWLSL…WVSRLVKKIP (200 aa). Phosphothreonine is present on threonine 1212. The segment at 1260-1315 adopts a Phorbol-ester/DAG-type zinc-finger fold; it reads GHEFIPTLYHFPTNCEACMKPLWHMFKPPPALECSRCHIKCHKDHMDKKEEIIAPC. A disordered region spans residues 1345-1388; that stretch reads VKKIPKKPPAPDPFARSSPRTSMKIQQNQSIRRPSRQLAPNKPS. 2 positions are modified to phosphoserine: serine 1362 and serine 1374. The segment covering 1362-1376 has biased composition (polar residues); that stretch reads SPRTSMKIQQNQSIR.

Belongs to the protein kinase superfamily. AGC Ser/Thr protein kinase family. As to quaternary structure, homodimer. Interacts with IRS1. Interacts with RAF1. Interacts with RHOA (activated by GTP), RHOB, RHOC. Interacts with PPP1R12A. Interacts with EP300. Interacts with CHORDC1. Interacts with BRCA2. Interacts with NPM1; this interaction enhances its activity. Interacts with SORL1. Interacts with PJVK. It depends on Mg(2+) as a cofactor. Post-translationally, autophosphorylated. Phosphorylation at Tyr-722 reduces its binding to RHOA and is crucial for focal adhesion dynamics. Dephosphorylation by PTPN11 stimulates its RHOA binding activity. Cleaved by granzyme B during apoptosis. This leads to constitutive activation of the kinase and membrane blebbing. As to expression, highly expressed in brain, lung, liver, skeletal muscle, kidney and testis.

It is found in the cytoplasm. It localises to the cell membrane. Its subcellular location is the nucleus. The protein localises to the cytoskeleton. The protein resides in the microtubule organizing center. It is found in the centrosome. It catalyses the reaction L-seryl-[protein] + ATP = O-phospho-L-seryl-[protein] + ADP + H(+). The catalysed reaction is L-threonyl-[protein] + ATP = O-phospho-L-threonyl-[protein] + ADP + H(+). Activated by RHOA binding. Inhibited by Y-27632. Functionally, protein kinase which is a key regulator of actin cytoskeleton and cell polarity. Involved in regulation of smooth muscle contraction, actin cytoskeleton organization, stress fiber and focal adhesion formation, neurite retraction, cell adhesion and motility via phosphorylation of ADD1, BRCA2, CNN1, EZR, DPYSL2, EP300, MSN, MYL9/MLC2, NPM1, RDX, PPP1R12A and VIM. Phosphorylates SORL1 and IRF4. Acts as a negative regulator of VEGF-induced angiogenic endothelial cell activation. Positively regulates the activation of p42/MAPK1-p44/MAPK3 and of p90RSK/RPS6KA1 during myogenic differentiation. Plays an important role in the timely initiation of centrosome duplication. Inhibits keratinocyte terminal differentiation. May regulate closure of the eyelids and ventral body wall through organization of actomyosin bundles. Plays a critical role in the regulation of spine and synaptic properties in the hippocampus. Plays a role in placental homeostasis during the perinatal period. Plays an important role in generating the circadian rhythm of the aortic myofilament Ca(2+) sensitivity and vascular contractility by modulating the myosin light chain phosphorylation. This chain is Rho-associated protein kinase 2 (Rock2), found in Rattus norvegicus (Rat).